The following is a 1072-amino-acid chain: Zn(2)-C6 fungal-type transcription factor FTF2 (1072 aa).

A DNA-binding region (zn(2)-C6 fungal-type) is located at residues 179–206; that stretch reads CIACRRKKIRCSGEKPACKHCLRSRIPC.

It localises to the nucleus. Its function is as follows. Zn(2)-C6 fungal-type transcription factor that has a role in conidia production and also in plant colonization. Acts as a negative regulator of the production of macroconidia and is required for full virulence and the positive regulation of SIX effectors. In addition, FTF2 is also involved in the regulation of class II hydrophobins FOXG_02746 and FOXG_02748 likely required for plant colonization. This Fusarium oxysporum f. sp. lycopersici (strain 4287 / CBS 123668 / FGSC 9935 / NRRL 34936) (Fusarium vascular wilt of tomato) protein is Zn(2)-C6 fungal-type transcription factor FTF2.